The primary structure comprises 577 residues: Arginine--tRNA ligase (577 aa).

Residues 122 to 132 (PNVAKEMHVGH) carry the 'HIGH' region motif.

Belongs to the class-I aminoacyl-tRNA synthetase family. Monomer.

It is found in the cytoplasm. It carries out the reaction tRNA(Arg) + L-arginine + ATP = L-arginyl-tRNA(Arg) + AMP + diphosphate. The protein is Arginine--tRNA ligase of Shigella dysenteriae serotype 1 (strain Sd197).